Consider the following 545-residue polypeptide: Tetrahydrocannabinolic acid synthase (545 aa).

Residues 1 to 28 (MNCSAFSFWFVCKIIFFFLSFHIQISIA) form the signal peptide. A disulfide bridge links cysteine 37 with cysteine 99. Asparagine 65 and asparagine 89 each carry an N-linked (GlcNAc...) asparagine glycan. In terms of domain architecture, FAD-binding PCMH-type spans 77 to 251 (TTPKPLVIVT…AAWKIKLVAV (175 aa)). Residues 109–115 (TRSGGHD) and serine 120 each bind FAD. The segment at residues 114–176 (HDAEGMSYIS…ENLSFPGGYC (63 aa)) is a cross-link (6-(S-cysteinyl)-8alpha-(pros-histidyl)-FAD (His-Cys)). Residue asparagine 168 is glycosylated (N-linked (GlcNAc...) asparagine). FAD contacts are provided by residues cysteine 176, 180 to 184 (GVGGH), tyrosine 190, glutamate 236, and isoleucine 241. Histidine 292 is a binding site for cannabigerolate. N-linked (GlcNAc...) asparagine glycans are attached at residues asparagine 297, asparagine 305, and asparagine 329. Residues tyrosine 417 and glutamate 442 each coordinate cannabigerolate. Residue asparagine 467 is glycosylated (N-linked (GlcNAc...) asparagine). 481–483 (YLN) provides a ligand contact to FAD. The active-site Proton acceptor is tyrosine 484. Asparagine 499 carries N-linked (GlcNAc...) asparagine glycosylation.

Belongs to the oxygen-dependent FAD-linked oxidoreductase family. As to quaternary structure, monomer. FAD serves as cofactor. In terms of processing, glycosylated when produced in a heterologous system. The deglycosylated THCA synthase has more catalytic activity than the glycosylated form. Post-translationally, the FAD cofactor is bound via a bicovalent 6-S-cysteinyl, 8alpha-N1-histidyl FAD linkage. As to expression, expressed in the secretory cells of glandular trichomes.

The protein resides in the secreted. It localises to the extracellular space. The protein localises to the apoplast. The enzyme catalyses cannabigerolate + O2 = Delta(9)-tetrahydrocannabinolate + H2O2. Its pathway is secondary metabolite biosynthesis; terpenoid biosynthesis. Inhibited by Hg(2+). In terms of biological role, oxidoreductase involved in the biosynthesis of cannabinoids-related terpenophenolic natural products, which have pharmacological activity. Catalyzes the oxidative cyclization of the monoterpene moiety in cannabigerolic acid (CBGA), producing delta(9)-tetrahydrocannabinolate (THCA), the major cannabioid in drug-type Cannabis plants. Can also use cannabinerolic acid as substrate, but not cannabigerol or cannabinerol. In Cannabis sativa (Hemp), this protein is Tetrahydrocannabinolic acid synthase.